A 247-amino-acid polypeptide reads, in one-letter code: Protein NipSnap homolog 3B (247 aa).

N6-succinyllysine is present on residues K45, K48, K57, and K166.

Belongs to the NipSnap family.

The protein localises to the cytoplasm. Its subcellular location is the cytosol. The sequence is that of Protein NipSnap homolog 3B (Nipsnap3b) from Mus musculus (Mouse).